A 111-amino-acid chain; its full sequence is Ciprofloxacin tolerance protein (111 aa).

Residues 1–5 lie on the Periplasmic side of the membrane; sequence MVTAN. The helical transmembrane segment at 6-26 threads the bilayer; the sequence is FAAIAGLSLIAVALVAVFFSP. Over 27-30 the chain is Cytoplasmic; it reads YRRW. A helical transmembrane segment spans residues 31–51; sequence LGFMLAGMFFWGLLEVVRFGV. Residues 52–58 lie on the Periplasmic side of the membrane; it reads QVTFEMP. The helical transmembrane segment at 59–79 threads the bilayer; that stretch reads VTYSYLTALSLAMVMVTFVLL. Residues 80 to 111 lie on the Cytoplasmic side of the membrane; sequence REDKQAQKALANRQYIEHTPVYEDDQQQCSSR.

The protein resides in the cell inner membrane. In terms of biological role, may play a role in cellular filamentation, especially in response to ciprofloxacin. Increased expression confers tolerance to the antibiotic ciprofloxacin. This Acinetobacter baumannii protein is Ciprofloxacin tolerance protein.